The sequence spans 137 residues: Histone H2B.3 (137 aa).

The span at 1-37 (KPAEKKPAEKTPVAEKAPAEKKPKAGKKLPKDAAAGD) shows a compositional bias: basic and acidic residues. The disordered stretch occupies residues 1–45 (KPAEKKPAEKTPVAEKAPAEKKPKAGKKLPKDAAAGDKKKKRSKK). N6-acetyllysine is present on residues K27 and K28. A Glycyl lysine isopeptide (Lys-Gly) (interchain with G-Cter in ubiquitin) cross-link involves residue K133.

Belongs to the histone H2B family. The nucleosome is a histone octamer containing two molecules each of H2A, H2B, H3 and H4 assembled in one H3-H4 heterotetramer and two H2A-H2B heterodimers. The octamer wraps approximately 147 bp of DNA. Post-translationally, can be acetylated to formH2BK33ac and H2BK34ac. In terms of processing, monoubiquitinated to form H2BK143ub1; may give a specific tag for epigenetic transcriptional activation. In terms of tissue distribution, ubiquitous. Highest level in shoots, fruits and young flower buds, including petals, anthers and ovules.

It localises to the nucleus. It is found in the chromosome. Core component of nucleosome. Nucleosomes wrap and compact DNA into chromatin, limiting DNA accessibility to the cellular machineries which require DNA as a template. Histones thereby play a central role in transcription regulation, DNA repair, DNA replication and chromosomal stability. DNA accessibility is regulated via a complex set of post-translational modifications of histones, also called histone code, and nucleosome remodeling. This chain is Histone H2B.3 (H2B-3), found in Solanum lycopersicum (Tomato).